Here is a 151-residue protein sequence, read N- to C-terminus: RNA polymerase-binding transcription factor DksA (151 aa).

The Zn(2+) site is built by C114, C117, C135, and C138. A dksA C4-type zinc finger spans residues 114–138; sequence CNSCAVEIGIRRLEARPTANLCIDC.

Belongs to the DksA family. Interacts directly with the RNA polymerase.

It is found in the cytoplasm. Transcription factor that acts by binding directly to the RNA polymerase (RNAP). Required for negative regulation of rRNA expression and positive regulation of several amino acid biosynthesis promoters. Also required for regulation of fis expression. The sequence is that of RNA polymerase-binding transcription factor DksA from Buchnera aphidicola subsp. Schizaphis graminum (strain Sg).